A 457-amino-acid polypeptide reads, in one-letter code: F-box/LRR-repeat protein At2g42730 (457 aa).

Positions Lys4–Asp50 constitute an F-box domain. LRR repeat units follow at residues Met265–Leu288, Ile292–Met315, and Phe318–Asn343.

The protein is F-box/LRR-repeat protein At2g42730 of Arabidopsis thaliana (Mouse-ear cress).